A 358-amino-acid chain; its full sequence is 1-deoxy-D-xylulose 5-phosphate reductoisomerase (358 aa).

Residues Thr-7, Gly-8, Ser-9, Ile-10, Gly-31, Asn-33, and Asn-114 each coordinate NADPH. Lys-115 lines the 1-deoxy-D-xylulose 5-phosphate pocket. Glu-116 provides a ligand contact to NADPH. Mn(2+) is bound at residue Asp-134. 1-deoxy-D-xylulose 5-phosphate contacts are provided by Ser-135, Glu-136, Ser-157, and His-180. Residue Glu-136 coordinates Mn(2+). An NADPH-binding site is contributed by Gly-186. 4 residues coordinate 1-deoxy-D-xylulose 5-phosphate: Ser-193, Asn-198, Lys-199, and Glu-202. Glu-202 serves as a coordination point for Mn(2+).

This sequence belongs to the DXR family. Mg(2+) serves as cofactor. The cofactor is Mn(2+).

The enzyme catalyses 2-C-methyl-D-erythritol 4-phosphate + NADP(+) = 1-deoxy-D-xylulose 5-phosphate + NADPH + H(+). It participates in isoprenoid biosynthesis; isopentenyl diphosphate biosynthesis via DXP pathway; isopentenyl diphosphate from 1-deoxy-D-xylulose 5-phosphate: step 1/6. In terms of biological role, catalyzes the NADPH-dependent rearrangement and reduction of 1-deoxy-D-xylulose-5-phosphate (DXP) to 2-C-methyl-D-erythritol 4-phosphate (MEP). In Wolinella succinogenes (strain ATCC 29543 / DSM 1740 / CCUG 13145 / JCM 31913 / LMG 7466 / NCTC 11488 / FDC 602W) (Vibrio succinogenes), this protein is 1-deoxy-D-xylulose 5-phosphate reductoisomerase.